A 66-amino-acid polypeptide reads, in one-letter code: Large ribosomal subunit protein bL33c (66 aa).

The protein belongs to the bacterial ribosomal protein bL33 family.

It is found in the plastid. The protein resides in the chloroplast. In Nasturtium officinale (Watercress), this protein is Large ribosomal subunit protein bL33c.